Here is a 173-residue protein sequence, read N- to C-terminus: UPF0316 protein Bsph_0745 (173 aa).

3 consecutive transmembrane segments (helical) span residues 4-24 (IVLI…RTIF), 31-51 (FLAA…LSLV), and 58-78 (MLAM…GAKI).

Belongs to the UPF0316 family.

The protein localises to the cell membrane. In Lysinibacillus sphaericus (strain C3-41), this protein is UPF0316 protein Bsph_0745.